We begin with the raw amino-acid sequence, 361 residues long: Phosphoserine aminotransferase (361 aa).

R43 contacts L-glutamate. Pyridoxal 5'-phosphate is bound by residues 77-78 (AS), W103, T153, D173, and Q196. N6-(pyridoxal phosphate)lysine is present on K197. 238–239 (NT) is a binding site for pyridoxal 5'-phosphate.

Belongs to the class-V pyridoxal-phosphate-dependent aminotransferase family. SerC subfamily. As to quaternary structure, homodimer. It depends on pyridoxal 5'-phosphate as a cofactor.

Its subcellular location is the cytoplasm. The enzyme catalyses O-phospho-L-serine + 2-oxoglutarate = 3-phosphooxypyruvate + L-glutamate. It carries out the reaction 4-(phosphooxy)-L-threonine + 2-oxoglutarate = (R)-3-hydroxy-2-oxo-4-phosphooxybutanoate + L-glutamate. The protein operates within amino-acid biosynthesis; L-serine biosynthesis; L-serine from 3-phospho-D-glycerate: step 2/3. It functions in the pathway cofactor biosynthesis; pyridoxine 5'-phosphate biosynthesis; pyridoxine 5'-phosphate from D-erythrose 4-phosphate: step 3/5. Its function is as follows. Catalyzes the reversible conversion of 3-phosphohydroxypyruvate to phosphoserine and of 3-hydroxy-2-oxo-4-phosphonooxybutanoate to phosphohydroxythreonine. This Pseudomonas aeruginosa (strain ATCC 15692 / DSM 22644 / CIP 104116 / JCM 14847 / LMG 12228 / 1C / PRS 101 / PAO1) protein is Phosphoserine aminotransferase.